Here is a 489-residue protein sequence, read N- to C-terminus: Glutamyl-tRNA(Gln) amidotransferase subunit A (489 aa).

Catalysis depends on charge relay system residues Lys75 and Ser150. Ser174 (acyl-ester intermediate) is an active-site residue.

This sequence belongs to the amidase family. GatA subfamily. As to quaternary structure, heterotrimer of A, B and C subunits.

The enzyme catalyses L-glutamyl-tRNA(Gln) + L-glutamine + ATP + H2O = L-glutaminyl-tRNA(Gln) + L-glutamate + ADP + phosphate + H(+). In terms of biological role, allows the formation of correctly charged Gln-tRNA(Gln) through the transamidation of misacylated Glu-tRNA(Gln) in organisms which lack glutaminyl-tRNA synthetase. The reaction takes place in the presence of glutamine and ATP through an activated gamma-phospho-Glu-tRNA(Gln). This Gloeobacter violaceus (strain ATCC 29082 / PCC 7421) protein is Glutamyl-tRNA(Gln) amidotransferase subunit A.